The primary structure comprises 115 residues: UPF0738 protein SH1953 (115 aa).

It belongs to the UPF0738 family.

This is UPF0738 protein SH1953 from Staphylococcus haemolyticus (strain JCSC1435).